Reading from the N-terminus, the 179-residue chain is Transcription factor NF-E4 (179 aa).

Lys43 carries the post-translational modification N6-acetyllysine. The tract at residues 100–179 is disordered; the sequence is AMKATGPHNA…QLPSLHLSQG (80 aa). Composition is skewed to polar residues over residues 143–153 and 163–179; these read LSQSNPPTRIS and ALEQTPQQLPSLHLSQG.

In terms of assembly, component of the SSP (stage selector protein) complex, which appears to be a heteromer of TFCP2 and 2 copies of NFE4. Interacts with HDAC1 and PCAF. Isoform 2 interacts with TFCP2. Post-translationally, acetylation at Lys-43 prolongs the protein half-life by preventing ubiquitin-mediated degradation and reduces the interaction between NF-E4 and HDAC1, potentially maximizing the activating ability of the factor at the gamma-promoter. In terms of processing, ubiquitinated; leading to its degradation by the proteasome. Acetylation at Lys-43 prevents ubiquitination. Specifically expressed in fetal liver, cord blood and bone marrow. Also expressed in the K562 and HEL cell lines, which constitutively express the fetal globin genes.

It is found in the nucleus. Functions as part of the SSP (stage selector protein) complex, a complex that contributes to the preferential expression of the gamma-gene in fetal erythroid cells by facilitating the interaction of the gamma-globin genes with enhancer elements contained in the locus control region (LCR). The complex binds to the stage selector element (SSE) in the proximal gamma-globin promoter. In contrast, isoform 2 acts as a repressor of gamma-globin gene expression by preventing NFE2 and RNA polymerase II recruitment to the promoter. This Homo sapiens (Human) protein is Transcription factor NF-E4 (NFE4).